Here is a 617-residue protein sequence, read N- to C-terminus: Formin-binding protein 1 (617 aa).

Positions 1 to 79 (MSWGTELWDQ…CKAFISNLNE (79 aa)) are required for self-association and induction of membrane tubulation. The 264-residue stretch at 1–264 (MSWGTELWDQ…AAESIDQKND (264 aa)) folds into the F-BAR domain. The interaction with microtubules stretch occupies residues 1 to 335 (MSWGTELWDQ…KKNKLMSLLT (335 aa)). N6-acetyllysine is present on residues Lys66 and Lys110. Residues 67–259 (YTSCKAFISN…DGIVKAAESI (193 aa)) are a coiled coil. The segment at 251–617 (GIVKAAESID…VCLDKNAKDS (367 aa)) is required for self-association and induction of membrane tubulation. Disordered regions lie at residues 280 to 315 (GDIE…KFGG) and 333 to 366 (LLTS…QKEP). A phosphoserine mark is found at Ser296 and Ser299. The segment covering 338 to 347 (HQPPPPPPAS) has biased composition (pro residues). A phosphoserine mark is found at Ser349 and Ser359. Residues 398 to 490 (TPEDFSNLPP…EVEGRLPARS (93 aa)) are a coiled coil. Residues 400–552 (EDFSNLPPEQ…FDDEEPLPAI (153 aa)) form an interaction with RND2 region. Positions 404-481 (NLPPEQRRKK…TQKFEAWLAE (78 aa)) constitute an REM-1 domain. The segment at 486–531 (LPARSEQARRQSGLYDSQNPPTVNNCAQDRESPDGSYTEEQSQESE) is disordered. The interaction with PDE6G stretch occupies residues 495–617 (RQSGLYDSQN…VCLDKNAKDS (123 aa)). Residue Ser497 is modified to Phosphoserine. A compositionally biased stretch (polar residues) spans 499-512 (LYDSQNPPTVNNCA). Position 500 is a phosphotyrosine (Tyr500). A required for interaction with TNKS region spans residues 514 to 617 (DRESPDGSYT…VCLDKNAKDS (104 aa)). Phosphoserine is present on Ser521. Residues 535–617 (LATDFDDEFD…VCLDKNAKDS (83 aa)) form an interaction with DNM1 and DNM3 region. The SH3 domain occupies 550-611 (PAIGTCKALY…PTSYVEVCLD (62 aa)). An interaction with ARHGAP17, DAAM1, DIAPH1 and DIAPH2 region spans residues 550–617 (PAIGTCKALY…VCLDKNAKDS (68 aa)). The interval 553–609 (GTCKALYTFEGQNEGTISVVEGETLYVIEEDKGDGWTRIRRNEDEEGYVPTSYVEVC) is interaction with DNM2 and WASL. An interaction with FASLG region spans residues 553-610 (GTCKALYTFEGQNEGTISVVEGETLYVIEEDKGDGWTRIRRNEDEEGYVPTSYVEVCL).

The protein belongs to the FNBP1 family. In terms of assembly, interacts specifically with GTP-bound RND2 and CDC42. Interacts with PDE6G and microtubules. Homodimerizes, the dimers can polymerize end-to-end to form filamentous structures. Interacts with AKAP9, ARHGAP17, DAAM1, DIAPH1, DIAPH2, DNM1, DNM2, DNM3, FASLG/FASL, SNX2 and WASL/N-WASP. May interact with TNKS. As to expression, very highly expressed in the epithelial cells of the gastrointestinal tract, respiratory, reproductive and urinary systems. Also highly expressed in brown adipose tissue, cardiomyocytes, enteric ganglia and glucagon producing cells of the pancreas. Expressed in germ cells of the testis and all regions of the brain.

The protein resides in the cytoplasm. Its subcellular location is the cytoskeleton. It is found in the cell cortex. It localises to the lysosome. The protein localises to the cytoplasmic vesicle. The protein resides in the cell membrane. Its subcellular location is the membrane. It is found in the clathrin-coated pit. In terms of biological role, may act as a link between RND2 signaling and regulation of the actin cytoskeleton. Required to coordinate membrane tubulation with reorganization of the actin cytoskeleton during the late stage of clathrin-mediated endocytosis. Binds to lipids such as phosphatidylinositol 4,5-bisphosphate and phosphatidylserine and promotes membrane invagination and the formation of tubules. Also enhances actin polymerization via the recruitment of WASL/N-WASP, which in turn activates the Arp2/3 complex. Actin polymerization may promote the fission of membrane tubules to form endocytic vesicles. May be required for the lysosomal retention of FASLG/FASL. The polypeptide is Formin-binding protein 1 (FNBP1) (Homo sapiens (Human)).